A 3961-amino-acid chain; its full sequence is Hybrid PKS-NRPS synthetase phm1 (3961 aa).

The 433-residue stretch at 4-436 folds into the Ketosynthase family 3 (KS3) domain; it reads SEPIAIIGSA…GTNAHAIVEA (433 aa). Residues C178, H317, and H356 each act as for beta-ketoacyl synthase activity in the active site. Residues 541-867 form a malonyl-CoA:ACP transacylase (MAT) domain region; the sequence is VFTGQGAQWP…RSKNDILELS (327 aa). Residues 933 to 1068 are N-terminal hotdog fold; the sequence is HPILGKRCLE…GTVTVTLAEP (136 aa). The dehydratase (DH) domain stretch occupies residues 933-1234; the sequence is HPILGKRCLE…LELVPFTAAR (302 aa). The PKS/mFAS DH domain occupies 933 to 1236; it reads HPILGKRCLE…LVPFTAARPE (304 aa). H966 (proton acceptor; for dehydratase activity) is an active-site residue. Residues 1083–1236 are C-terminal hotdog fold; that stretch reads MTEIEVDRFY…LVPFTAARPE (154 aa). D1143 (proton donor; for dehydratase activity) is an active-site residue. The segment at 1376 to 1569 is methyltransferase (MT) domain; that stretch reads FDFYDQGLGL…GFGGIDTSTP (194 aa). The tract at residues 2106–2277 is ketoreductase (KR) domain; the sequence is TYLLIGMSGQ…GVPGSAISIS (172 aa). A Carrier 1 domain is found at 2386 to 2464; the sequence is QAATIIKDGF…ELLQEAMDRT (79 aa). O-(pantetheine 4'-phosphoryl)serine is present on S2424. The segment at 2482-2527 is disordered; sequence PVTNTATPPPEVQVTGSASDSSRSLTPDGLSTSRPSTPVRTPMTEI. Residues 2495–2520 are compositionally biased toward polar residues; that stretch reads VTGSASDSSRSLTPDGLSTSRPSTPV. The tract at residues 2553-2993 is condensation (C) domain; the sequence is PMSYGQARFW…DLPRWAGADV (441 aa). Residues 3019-3424 are adenylation (A) (KR) domain; the sequence is QMIGTYASKP…DGALFVHGRI (406 aa). A Carrier 2 domain is found at 3542-3616; it reads ANMEGRVAAL…GMARHVRAAF (75 aa). An O-(pantetheine 4'-phosphoryl)serine modification is found at S3576. A reductase (RED) domain region spans residues 3725–3871; sequence ITDIVFHCAA…VRPVSDVATT (147 aa).

This sequence in the C-terminal section; belongs to the NRP synthetase family.

The protein operates within secondary metabolite biosynthesis. Hybrid PKS-NRPS synthetase; part of the gene cluster that mediates the biosynthesis of the trans-fused decalin-containing tetramic acid phomasetin, the stereochemical opposite of the HIV-1 integrase inhibitor equisetin. The PKS module of phm1 together with the enoylreductase phm4 catalyze the formation of the polyketide unit which is then conjugated to L-serine by the condensation domain of the phm1 NRPS module. Activity of the Dieckmann cyclase domain (RED) of phm1 results in release of the Dieckmann product intermediate. The Diels-Alderase phm7 then uses the Dieckmann product of phm1 as substrate and catalyzes the Diels-Alder cycloaddition to form the decalin ring of N-desmethylphomasetin. N-desmethylphomasetin is further methylated to phomasetin by the methyltransferase phm5. This is Hybrid PKS-NRPS synthetase phm1 from Pyrenochaetopsis sp.